The chain runs to 728 residues: Myb-related protein A (728 aa).

Positions 1 to 31 (MAGRARSEDEEEDGQFTEHDYDVSLQKGPKK) are disordered. HTH myb-type domains lie at 30 to 80 (KKPW…HKVL), 81 to 136 (SPEL…NPDV), and 137 to 187 (KKSS…KRKV). 3 DNA-binding regions (H-T-H motif) span residues 57–80 (WGVV…HKVL), 109–132 (WSII…HNHL), and 160–183 (WAEI…NSTM). Residues 230–293 (IPRYSSLSHD…RKRVPSGSSL (64 aa)) form a transcriptional activation domain region. The negative regulatory domain stretch occupies residues 296–534 (SESYHMGESM…IRRSLMAVTP (239 aa)).

As to quaternary structure, component of the DREAM complex.

It is found in the nucleus. In terms of biological role, transcription factor that specifically recognizes the sequence 5'-YAAC[GT]G-3'. Acts as a master regulator of male meiosis by promoting expression of piRNAs. The piRNA metabolic process mediates the repression of transposable elements during meiosis by forming complexes composed of piRNAs and Piwi proteins and governs the methylation and subsequent repression of transposons, which is essential for the germline integrity. The sequence is that of Myb-related protein A (mybl1) from Xenopus laevis (African clawed frog).